A 266-amino-acid polypeptide reads, in one-letter code: 2-C-methyl-D-erythritol 4-phosphate cytidylyltransferase (266 aa).

The interval 229-266 (NRDCGPGTRDPESAHPQSSVSASAFSGPGSRAPGPEEI) is disordered. The segment covering 243-252 (HPQSSVSASA) has biased composition (polar residues).

It belongs to the IspD/TarI cytidylyltransferase family. IspD subfamily.

The enzyme catalyses 2-C-methyl-D-erythritol 4-phosphate + CTP + H(+) = 4-CDP-2-C-methyl-D-erythritol + diphosphate. It participates in isoprenoid biosynthesis; isopentenyl diphosphate biosynthesis via DXP pathway; isopentenyl diphosphate from 1-deoxy-D-xylulose 5-phosphate: step 2/6. Catalyzes the formation of 4-diphosphocytidyl-2-C-methyl-D-erythritol from CTP and 2-C-methyl-D-erythritol 4-phosphate (MEP). The chain is 2-C-methyl-D-erythritol 4-phosphate cytidylyltransferase from Xanthomonas axonopodis pv. citri (strain 306).